Consider the following 308-residue polypeptide: Aspartate carbamoyltransferase catalytic subunit (308 aa).

Residues arginine 58 and threonine 59 each coordinate carbamoyl phosphate. Residue lysine 86 participates in L-aspartate binding. Positions 108, 136, and 139 each coordinate carbamoyl phosphate. Positions 169 and 227 each coordinate L-aspartate. The carbamoyl phosphate site is built by glycine 268 and proline 269.

The protein belongs to the aspartate/ornithine carbamoyltransferase superfamily. ATCase family. Heterododecamer (2C3:3R2) of six catalytic PyrB chains organized as two trimers (C3), and six regulatory PyrI chains organized as three dimers (R2).

It carries out the reaction carbamoyl phosphate + L-aspartate = N-carbamoyl-L-aspartate + phosphate + H(+). It functions in the pathway pyrimidine metabolism; UMP biosynthesis via de novo pathway; (S)-dihydroorotate from bicarbonate: step 2/3. In terms of biological role, catalyzes the condensation of carbamoyl phosphate and aspartate to form carbamoyl aspartate and inorganic phosphate, the committed step in the de novo pyrimidine nucleotide biosynthesis pathway. This is Aspartate carbamoyltransferase catalytic subunit from Chloroflexus aggregans (strain MD-66 / DSM 9485).